The following is a 360-amino-acid chain: Phospho-N-acetylmuramoyl-pentapeptide-transferase (360 aa).

10 helical membrane-spanning segments follow: residues isoleucine 27–tryptophan 47, proline 72–tyrosine 92, serine 94–isoleucine 114, tryptophan 132–glycine 152, isoleucine 168–serine 188, glycine 199–threonine 219, alanine 236–phenylalanine 256, valine 263–leucine 283, phenylalanine 288–valine 308, and valine 338–lysine 358.

It belongs to the glycosyltransferase 4 family. MraY subfamily. Mg(2+) serves as cofactor.

It is found in the cell inner membrane. It catalyses the reaction UDP-N-acetyl-alpha-D-muramoyl-L-alanyl-gamma-D-glutamyl-meso-2,6-diaminopimeloyl-D-alanyl-D-alanine + di-trans,octa-cis-undecaprenyl phosphate = di-trans,octa-cis-undecaprenyl diphospho-N-acetyl-alpha-D-muramoyl-L-alanyl-D-glutamyl-meso-2,6-diaminopimeloyl-D-alanyl-D-alanine + UMP. It functions in the pathway cell wall biogenesis; peptidoglycan biosynthesis. Functionally, catalyzes the initial step of the lipid cycle reactions in the biosynthesis of the cell wall peptidoglycan: transfers peptidoglycan precursor phospho-MurNAc-pentapeptide from UDP-MurNAc-pentapeptide onto the lipid carrier undecaprenyl phosphate, yielding undecaprenyl-pyrophosphoryl-MurNAc-pentapeptide, known as lipid I. This is Phospho-N-acetylmuramoyl-pentapeptide-transferase from Yersinia pestis bv. Antiqua (strain Angola).